Reading from the N-terminus, the 498-residue chain is Alpha-amylase A (498 aa).

The first 21 residues, 1 to 21 (MMVAWWSLFLYGLQVAAPALA), serve as a signal peptide directing secretion. The cysteines at positions 51 and 59 are disulfide-linked. Substrate contacts are provided by Q56 and W104. N142 contributes to the Ca(2+) binding site. H143 provides a ligand contact to substrate. An intrachain disulfide couples C171 to C185. The Ca(2+) site is built by E183 and D196. N218 carries N-linked (GlcNAc...) asparagine glycosylation. R225 is a substrate binding site. Ca(2+)-binding residues include D227, H231, and E251. Catalysis depends on D227, which acts as the Nucleophile. 230–231 (KH) serves as a coordination point for substrate. E251 serves as the catalytic Proton donor. Residue G255 coordinates substrate. C261 and C304 are joined by a disulfide. Substrate-binding residues include D318 and R365. C461 and C496 are joined by a disulfide.

Belongs to the glycosyl hydrolase 13 family. Requires Ca(2+) as cofactor.

The enzyme catalyses Endohydrolysis of (1-&gt;4)-alpha-D-glucosidic linkages in polysaccharides containing three or more (1-&gt;4)-alpha-linked D-glucose units.. The polypeptide is Alpha-amylase A (amyA) (Aspergillus awamori (Black koji mold)).